Consider the following 385-residue polypeptide: Odorant receptor 82a (385 aa).

Residues 1-32 lie on the Cytoplasmic side of the membrane; that stretch reads MGRLFQLQEYCLRAMGHKDDMDSTDSTALSLK. A helical transmembrane segment spans residues 33–53; the sequence is HISSLIFVISAQYPLISYVAY. The Extracellular segment spans residues 54–62; that stretch reads NRNDMEKVT. The chain crosses the membrane as a helical span at residues 63–83; that stretch reads ACLSVVFTNMLTVIKISTFLA. The Cytoplasmic portion of the chain corresponds to 84 to 131; it reads NRKDFWEMIHRFRKMHEQSASHIPRYREGLDYVAEANKLASFLGRAYC. Residues 132–152 form a helical membrane-spanning segment; it reads VSCGLTGLYFMLGPIVKIGVC. The Extracellular portion of the chain corresponds to 153–186; sequence RWHGTTCDKELPMPMKFPFNDLESPGYEVCFLYT. A helical transmembrane segment spans residues 187-207; the sequence is VLVTVVVVAYASAVDGLFISF. Over 208–257 the chain is Cytoplasmic; that stretch reads AINLRAHFQTLQRQIENWEFPSSEPDTQIRLKSIVEYHVLLLSLSRKLRS. Residues 258–278 traverse the membrane as a helical segment; that stretch reads IYTPTVMGQFVITSLQVGVII. Topologically, residues 279–290 are extracellular; it reads YQLVTNMDSVMD. A helical transmembrane segment spans residues 291–311; the sequence is LLLYASFFGSIMLQLFIYCYG. The Cytoplasmic portion of the chain corresponds to 312-357; sequence GEIIKAESLQVDTAVRLSNWHLASPKTRTSLSLIILQSQKEVLIRA. A helical membrane pass occupies residues 358–378; that stretch reads GFFVASLANFVGICRTALSLI. Over 379 to 385 the chain is Extracellular; sequence TLIKSIE.

Belongs to the insect chemoreceptor superfamily. Heteromeric odorant receptor channel (TC 1.A.69) family. Or1a subfamily. In terms of assembly, interacts with Orco. Complexes exist early in the endomembrane system in olfactory sensory neurons (OSNs), coupling these complexes to the conserved ciliary trafficking pathway. Expressed in olfactory sensory neurons in the antenna.

It is found in the cell membrane. Functionally, odorant receptor which mediates acceptance or avoidance behavior, depending on its substrates. The odorant receptor repertoire encodes a large collection of odor stimuli that vary widely in identity, intensity, and duration. May form a complex with Orco to form odorant-sensing units, providing sensitive and prolonged odorant signaling and calcium permeability. This Drosophila melanogaster (Fruit fly) protein is Odorant receptor 82a (Or82a).